Reading from the N-terminus, the 106-residue chain is Pyrimidine/purine nucleoside phosphorylase (106 aa).

Belongs to the nucleoside phosphorylase PpnP family.

The enzyme catalyses a purine D-ribonucleoside + phosphate = a purine nucleobase + alpha-D-ribose 1-phosphate. The catalysed reaction is adenosine + phosphate = alpha-D-ribose 1-phosphate + adenine. It catalyses the reaction cytidine + phosphate = cytosine + alpha-D-ribose 1-phosphate. It carries out the reaction guanosine + phosphate = alpha-D-ribose 1-phosphate + guanine. The enzyme catalyses inosine + phosphate = alpha-D-ribose 1-phosphate + hypoxanthine. The catalysed reaction is thymidine + phosphate = 2-deoxy-alpha-D-ribose 1-phosphate + thymine. It catalyses the reaction uridine + phosphate = alpha-D-ribose 1-phosphate + uracil. It carries out the reaction xanthosine + phosphate = alpha-D-ribose 1-phosphate + xanthine. In terms of biological role, catalyzes the phosphorolysis of diverse nucleosides, yielding D-ribose 1-phosphate and the respective free bases. Can use uridine, adenosine, guanosine, cytidine, thymidine, inosine and xanthosine as substrates. Also catalyzes the reverse reactions. The chain is Pyrimidine/purine nucleoside phosphorylase from Leptospira interrogans serogroup Icterohaemorrhagiae serovar copenhageni (strain Fiocruz L1-130).